The chain runs to 196 residues: Peptidyl-tRNA hydrolase (196 aa).

TRNA is bound at residue Tyr-17. Residue His-22 is the Proton acceptor of the active site. TRNA is bound by residues Phe-68, Asn-70, and Asn-116.

This sequence belongs to the PTH family. Monomer.

The protein localises to the cytoplasm. It carries out the reaction an N-acyl-L-alpha-aminoacyl-tRNA + H2O = an N-acyl-L-amino acid + a tRNA + H(+). Functionally, hydrolyzes ribosome-free peptidyl-tRNAs (with 1 or more amino acids incorporated), which drop off the ribosome during protein synthesis, or as a result of ribosome stalling. Catalyzes the release of premature peptidyl moieties from peptidyl-tRNA molecules trapped in stalled 50S ribosomal subunits, and thus maintains levels of free tRNAs and 50S ribosomes. This is Peptidyl-tRNA hydrolase from Photorhabdus laumondii subsp. laumondii (strain DSM 15139 / CIP 105565 / TT01) (Photorhabdus luminescens subsp. laumondii).